The sequence spans 509 residues: 2,3-bisphosphoglycerate-independent phosphoglycerate mutase (509 aa).

Mn(2+) contacts are provided by D13 and S63. S63 acts as the Phosphoserine intermediate in catalysis. Substrate-binding positions include H124, 154–155, R186, R192, 261–264, and K335; these read RD and RPDR. The Mn(2+) site is built by D400, H404, D441, H442, and H459.

The protein belongs to the BPG-independent phosphoglycerate mutase family. In terms of assembly, monomer. The cofactor is Mn(2+).

The catalysed reaction is (2R)-2-phosphoglycerate = (2R)-3-phosphoglycerate. It functions in the pathway carbohydrate degradation; glycolysis; pyruvate from D-glyceraldehyde 3-phosphate: step 3/5. Its function is as follows. Catalyzes the interconversion of 2-phosphoglycerate and 3-phosphoglycerate. In Desulforudis audaxviator (strain MP104C), this protein is 2,3-bisphosphoglycerate-independent phosphoglycerate mutase.